The sequence spans 242 residues: Ribosomal RNA small subunit methyltransferase G (242 aa).

S-adenosyl-L-methionine-binding positions include Gly-78, Leu-83, 130–131 (AE), and Arg-151.

This sequence belongs to the methyltransferase superfamily. RNA methyltransferase RsmG family.

It localises to the cytoplasm. Its function is as follows. Specifically methylates the N7 position of guanine in position 518 of 16S rRNA. This is Ribosomal RNA small subunit methyltransferase G from Salinispora arenicola (strain CNS-205).